A 191-amino-acid chain; its full sequence is Putative 3-methyladenine DNA glycosylase (191 aa).

This sequence belongs to the DNA glycosylase MPG family.

This Cutibacterium acnes (strain DSM 16379 / KPA171202) (Propionibacterium acnes) protein is Putative 3-methyladenine DNA glycosylase.